Reading from the N-terminus, the 492-residue chain is Bifunctional shikimate kinase/3-dehydroquinate synthase (492 aa).

The segment at 1–161 (MRIFLVGMMG…TALVVLEALD (161 aa)) is shikimate kinase. Residue 10 to 15 (GSGKST) coordinates ATP. Ser-14 contributes to the Mg(2+) binding site. Asp-32, Arg-56, and Gly-78 together coordinate substrate. Arg-114 contributes to the ATP binding site. Arg-131 contacts substrate. The tract at residues 162 to 492 (EKEISTIEKP…DPLELLEVVD (331 aa)) is 3-dehydroquinate synthase.

The protein in the N-terminal section; belongs to the shikimate kinase family. This sequence in the C-terminal section; belongs to the sugar phosphate cyclases superfamily. Dehydroquinate synthase family. The cofactor is Mg(2+). It depends on NAD(+) as a cofactor. Requires a divalent metal cation as cofactor.

The protein resides in the cytoplasm. The catalysed reaction is 7-phospho-2-dehydro-3-deoxy-D-arabino-heptonate = 3-dehydroquinate + phosphate. The enzyme catalyses shikimate + ATP = 3-phosphoshikimate + ADP + H(+). It functions in the pathway metabolic intermediate biosynthesis; chorismate biosynthesis; chorismate from D-erythrose 4-phosphate and phosphoenolpyruvate: step 2/7. The protein operates within metabolic intermediate biosynthesis; chorismate biosynthesis; chorismate from D-erythrose 4-phosphate and phosphoenolpyruvate: step 5/7. Its function is as follows. Catalyzes the specific phosphorylation of the 3-hydroxyl group of shikimic acid using ATP as a cosubstrate. The chain is Bifunctional shikimate kinase/3-dehydroquinate synthase (aroKB) from Thermotoga maritima (strain ATCC 43589 / DSM 3109 / JCM 10099 / NBRC 100826 / MSB8).